We begin with the raw amino-acid sequence, 214 residues long: MDLSAVRFDEKGLVPVVVQDARTGEVLTLAYANREALEETLRTRRSTFFSRSRQALWRKGETSGHTQEVVEVLLDCDGDAVVYRVLPQGPACHTGERTCFHRALLEGEKDLGFVVGQVYATIKERLRTLPEGSYVARMHHAGLDRILKKIGEEAGEVILAAKNQNPEELRHEAADLLFHLLLTLAELGLTPEDLAKTLWERHRPRSPYDGSHGN.

Residues 1 to 114 (MDLSAVRFDE…LEGEKDLGFV (114 aa)) form a phosphoribosyl-AMP cyclohydrolase region. Residues 115–214 (VGQVYATIKE…RSPYDGSHGN (100 aa)) are phosphoribosyl-ATP pyrophosphohydrolase.

This sequence in the N-terminal section; belongs to the PRA-CH family. The protein in the C-terminal section; belongs to the PRA-PH family.

Its subcellular location is the cytoplasm. It carries out the reaction 1-(5-phospho-beta-D-ribosyl)-ATP + H2O = 1-(5-phospho-beta-D-ribosyl)-5'-AMP + diphosphate + H(+). The enzyme catalyses 1-(5-phospho-beta-D-ribosyl)-5'-AMP + H2O = 1-(5-phospho-beta-D-ribosyl)-5-[(5-phospho-beta-D-ribosylamino)methylideneamino]imidazole-4-carboxamide. It participates in amino-acid biosynthesis; L-histidine biosynthesis; L-histidine from 5-phospho-alpha-D-ribose 1-diphosphate: step 2/9. The protein operates within amino-acid biosynthesis; L-histidine biosynthesis; L-histidine from 5-phospho-alpha-D-ribose 1-diphosphate: step 3/9. The protein is Histidine biosynthesis bifunctional protein HisIE of Thermus thermophilus (strain ATCC BAA-163 / DSM 7039 / HB27).